We begin with the raw amino-acid sequence, 179 residues long: Large ribosomal subunit protein uL10 (179 aa).

The protein belongs to the universal ribosomal protein uL10 family. As to quaternary structure, part of the ribosomal stalk of the 50S ribosomal subunit. The N-terminus interacts with L11 and the large rRNA to form the base of the stalk. The C-terminus forms an elongated spine to which L12 dimers bind in a sequential fashion forming a multimeric L10(L12)X complex.

Forms part of the ribosomal stalk, playing a central role in the interaction of the ribosome with GTP-bound translation factors. The sequence is that of Large ribosomal subunit protein uL10 from Polynucleobacter necessarius subsp. necessarius (strain STIR1).